A 340-amino-acid chain; its full sequence is Armadillo repeat-containing protein 12 (340 aa).

An interaction with TBC1D15 region spans residues 1 to 101 (MGKTIPRFLE…NITRCVYLLE (101 aa)). ARM repeat units lie at residues 100–139 (LEAE…AFSG), 179–218 (LPDY…YLAQ), and 278–318 (SLHE…SLQC). Residues 321-340 (DLGSRPSSCRPSHSCFKTGK) are disordered. A compositionally biased stretch (low complexity) spans 324–340 (SRPSSCRPSHSCFKTGK).

As to quaternary structure, interacts with TBC1D15, TBC1D21, GK2 and IMMT. Interacts with VDAC2 and VDAC3 in a TBC1D21-dependent manner. Interacts (via ARM domains) with RBBP4. In terms of tissue distribution, testis-specific.

The protein localises to the nucleus. The protein resides in the mitochondrion outer membrane. In terms of biological role, essential for male fertility and sperm mitochondrial sheath formation. Required for proper mitochondrial elongation and coiling along the flagellum during the formation of the mitochondrial sheath. Facilitates the growth and aggressiveness of neuroblastoma cells. Increases the EZH2 activity and H3K27me3 levels in a RBBP4-dependent manner, and facilitates the enrichment of polycomb repressive complex 2 and H3K27me3 on gene promoters, resulting in transcriptional repression of tumor suppressors affecting the proliferation, invasion, and metastasis of tumor cells. This Mus musculus (Mouse) protein is Armadillo repeat-containing protein 12 (Armc12).